Here is a 138-residue protein sequence, read N- to C-terminus: Nucleoside diphosphate kinase (138 aa).

Residues lysine 9, phenylalanine 57, arginine 85, threonine 91, arginine 102, and asparagine 112 each coordinate ATP. The active-site Pros-phosphohistidine intermediate is histidine 115.

The protein belongs to the NDK family. It depends on Mg(2+) as a cofactor.

The protein resides in the cytoplasm. It carries out the reaction a 2'-deoxyribonucleoside 5'-diphosphate + ATP = a 2'-deoxyribonucleoside 5'-triphosphate + ADP. It catalyses the reaction a ribonucleoside 5'-diphosphate + ATP = a ribonucleoside 5'-triphosphate + ADP. Its function is as follows. Major role in the synthesis of nucleoside triphosphates other than ATP. The ATP gamma phosphate is transferred to the NDP beta phosphate via a ping-pong mechanism, using a phosphorylated active-site intermediate. This Picrophilus torridus (strain ATCC 700027 / DSM 9790 / JCM 10055 / NBRC 100828 / KAW 2/3) protein is Nucleoside diphosphate kinase.